The following is a 483-amino-acid chain: Xylulose kinase (483 aa).

79 to 80 contacts substrate; the sequence is MH.

Belongs to the FGGY kinase family.

The catalysed reaction is D-xylulose + ATP = D-xylulose 5-phosphate + ADP + H(+). Its function is as follows. Catalyzes the phosphorylation of D-xylulose to D-xylulose 5-phosphate. This Staphylococcus xylosus protein is Xylulose kinase.